Here is a 391-residue protein sequence, read N- to C-terminus: Leucine aminopeptidase 1 (391 aa).

The signal sequence occupies residues 1–19 (MKLSIALALGATASTGVLA). Positions 20–91 (AVVPQQEPLI…YPTLHAGSYV (72 aa)) are excised as a propeptide. N183 is a glycosylation site (N-linked (GlcNAc...) asparagine). The Zn(2+) site is built by H191 and D210. N-linked (GlcNAc...) asparagine glycosylation is present at N235. Zn(2+)-binding residues include E249 and D276. A disulfide bridge links C325 with C329. Residue H358 coordinates Zn(2+).

The protein belongs to the peptidase M28 family. M28E subfamily. Monomer. Zn(2+) serves as cofactor.

It localises to the secreted. Its function is as follows. Extracellular aminopeptidase that allows assimilation of proteinaceous substrates. The chain is Leucine aminopeptidase 1 (lap1) from Aspergillus niger (strain ATCC MYA-4892 / CBS 513.88 / FGSC A1513).